The primary structure comprises 595 residues: P2X purinoceptor 7 (595 aa).

Over 1 to 22 (MPACCSWNDVFQYETNKVTRIQ) the chain is Cytoplasmic. Residue cysteine 4 is the site of S-palmitoyl cysteine attachment. The helical transmembrane segment at 23–46 (SVNYGTIKWILHMTVFSYVSFALM) threads the bilayer. Residues 47 to 328 (SDKLYQRKEP…ILVFGTGGKF (282 aa)) are Extracellular-facing. A glycan (N-linked (GlcNAc...) asparagine) is linked at asparagine 74. Cystine bridges form between cysteine 119–cysteine 168, cysteine 129–cysteine 152, and cysteine 135–cysteine 162. Arginine 125 carries the ADP-ribosylarginine modification. The N-linked (GlcNAc...) asparagine glycan is linked to asparagine 187. Threonine 189 serves as a coordination point for ATP. Asparagine 202 and asparagine 213 each carry an N-linked (GlcNAc...) asparagine glycan. Cysteine 216 and cysteine 226 form a disulfide bridge. Residue asparagine 241 is glycosylated (N-linked (GlcNAc...) asparagine). A disulfide bond links cysteine 260 and cysteine 269. N-linked (GlcNAc...) asparagine glycosylation occurs at asparagine 284. Residues arginine 294 and lysine 311 each contribute to the ATP site. Residues 329–353 (DIIQLVVYIGSTLSYFGLATVCIDL) form a helical membrane-spanning segment. Serine 342 is a Na(+) binding site. The Cytoplasmic portion of the chain corresponds to 354–595 (IINTYASTCC…GQYSGFKYPY (242 aa)). The interval 360-377 (STCCRSRVYPSCKCCEPC) is C-cys anchor. Residues cysteine 362, cysteine 363, cysteine 374, and cysteine 377 are each lipidated (S-palmitoyl cysteine). Residues 395–595 (KPTLKYVSFV…GQYSGFKYPY (201 aa)) form a cytoplasmic ballast region. Residues cysteine 479, cysteine 499, and cysteine 506 each coordinate Zn(2+). The GTP site is built by arginine 546, histidine 547, tyrosine 550, and alanine 567. Cysteine 572 contributes to the Zn(2+) binding site. GTP-binding residues include lysine 583, serine 589, and glycine 590.

Belongs to the P2X receptor family. As to quaternary structure, homotrimer. Interacts with LAMA3, ITGB2, ACTB, ACTN4, SVIL, MPP3, HSPA1, HSPCB, HSPA8, PIK230 and PTPRB. Interacts (via C-terminus) with EMP2. Phosphorylation results in its inactivation. Post-translationally, ADP-ribosylation at Arg-125 is necessary and sufficient to activate P2RX7 and gate the channel. In terms of processing, palmitoylation of several cysteines in the C-terminal cytoplasmic tail is required for efficient localization to cell surface. Palmitoylation prevents channel desensitization by physically anchoring the palmitoylated groups to the membrane.

It localises to the cell membrane. It carries out the reaction Ca(2+)(in) = Ca(2+)(out). The enzyme catalyses K(+)(in) = K(+)(out). It catalyses the reaction Na(+)(in) = Na(+)(out). Activated by high extracellular ATP levels (0.1-2.5 mM). The synthetic analog 2'(3')-O-(4-benzoylbenzoyl)ATP (BzATP) acts as a potent agonist. Does not undergo desensitization, instead, undergoes a facilitation process where currents progressively increase with repetitive or prolonged agonist application. Palmitoylation prevents channel desensitization. The permeability of the P2RX7 channel is modulated by the amount of cholesterol in the plasma membrane. Functionally, ATP-gated nonselective transmembrane cation channel that requires high millimolar concentrations of ATP for activation. Upon ATP binding, it rapidly opens to allow the influx of small cations Na(+) and Ca(2+), and the K(+) efflux. Also has the ability to form a large pore in the cell membrane, allowing the passage of large cationic molecules. In microglia, may mediate the transmembrane transport of exogenous NADPH. In immune cells, P2RX7 acts as a molecular sensor in pathological inflammatory states by detecting and responding to high local concentrations of extracellar ATP. In microglial cells, P2RX7 activation leads to the release of pro-inflammatory cytokines, such as IL-1beta and IL-18, through the activation of the NLRP3 inflammasome and caspase-1. Cooperates with KCNK6 to activate NLRP3 inflammasome. Activates death pathways leading to apoptosis and autophagy. Activates death pathways leading to pyroptosis. Its function is as follows. Has a higher affinity for ATP, slower deactivation and an increased propensity to form large cation-permeable pores. This chain is P2X purinoceptor 7 (P2rx7), found in Rattus norvegicus (Rat).